Consider the following 136-residue polypeptide: 5-hydroxyisourate hydrolase (136 aa).

The signal sequence occupies residues 1–22; sequence MKRHILATVIASLVAAPAMALA. Residues histidine 31, arginine 69, and tyrosine 133 each contribute to the substrate site.

It belongs to the transthyretin family. 5-hydroxyisourate hydrolase subfamily. Homotetramer.

It localises to the periplasm. The enzyme catalyses 5-hydroxyisourate + H2O = 5-hydroxy-2-oxo-4-ureido-2,5-dihydro-1H-imidazole-5-carboxylate + H(+). In terms of biological role, catalyzes the hydrolysis of 5-hydroxyisourate (HIU) to 2-oxo-4-hydroxy-4-carboxy-5-ureidoimidazoline (OHCU). The chain is 5-hydroxyisourate hydrolase (hiuH) from Salmonella dublin.